The following is a 322-amino-acid chain: Homoserine kinase (322 aa).

106-116 (ALSSGMGGSAA) lines the ATP pocket.

Belongs to the GHMP kinase family. Homoserine kinase subfamily.

The protein resides in the cytoplasm. It carries out the reaction L-homoserine + ATP = O-phospho-L-homoserine + ADP + H(+). Its pathway is amino-acid biosynthesis; L-threonine biosynthesis; L-threonine from L-aspartate: step 4/5. Its function is as follows. Catalyzes the ATP-dependent phosphorylation of L-homoserine to L-homoserine phosphate. In Xanthomonas campestris pv. campestris (strain B100), this protein is Homoserine kinase.